A 117-amino-acid polypeptide reads, in one-letter code: Large ribosomal subunit protein uL18 (117 aa).

The protein belongs to the universal ribosomal protein uL18 family. As to quaternary structure, part of the 50S ribosomal subunit; part of the 5S rRNA/L5/L18/L25 subcomplex. Contacts the 5S and 23S rRNAs.

Its function is as follows. This is one of the proteins that bind and probably mediate the attachment of the 5S RNA into the large ribosomal subunit, where it forms part of the central protuberance. The chain is Large ribosomal subunit protein uL18 from Alkalilimnicola ehrlichii (strain ATCC BAA-1101 / DSM 17681 / MLHE-1).